Consider the following 387-residue polypeptide: uncharacterized protein (387 aa).

Disordered stretches follow at residues 1-126, 138-169, and 275-298; these read MDGR…GDDE, GNQG…RNEE, and SSIF…AGNK. Residues 32–45 are compositionally biased toward basic and acidic residues; that stretch reads SSDHRTSNSAESKK. Polar residues-rich tracts occupy residues 49-63 and 78-93; these read SGKS…NNDN and DLSS…SKGT. The span at 155 to 169 shows a compositional bias: basic and acidic residues; the sequence is ENGKNDIEKNNRNEE. The span at 275–296 shows a compositional bias: polar residues; that stretch reads SSIFSDSQAVTTDDEGISSTAG.

Belongs to the ThrE exporter (TC 2.A.79) family.

This is an uncharacterized protein from Saccharomyces cerevisiae (strain ATCC 204508 / S288c) (Baker's yeast).